Consider the following 826-residue polypeptide: Ubiquitin carboxyl-terminal hydrolase 16 (826 aa).

The UBP-type zinc finger occupies 22–142; the sequence is PMCRHIRKGL…QVVDYVRKQA (121 aa). Positions 24, 26, 48, 51, 74, 77, 82, 90, 94, 103, 116, and 119 each coordinate Zn(2+). A Glycyl lysine isopeptide (Lys-Gly) (interchain with G-Cter in SUMO2) cross-link involves residue lysine 140. The disordered stretch occupies residues 146–190; the sequence is TPKPAEKDNGNIELENKKLEKESKNEQEREKKENMAKENPPMNSP. Positions 149 to 181 are enriched in basic and acidic residues; sequence PAEKDNGNIELENKKLEKESKNEQEREKKENMA. Serine 189 carries the phosphoserine modification. In terms of domain architecture, USP spans 196 to 825; the sequence is KGLSNLGNTC…QAYLLFYERI (630 aa). Cysteine 205 functions as the Nucleophile in the catalytic mechanism. The segment covering 394-408 has biased composition (basic and acidic residues); that stretch reads SGKKSVNDKNLKKTM. A disordered region spans residues 394-460; the sequence is SGKKSVNDKN…AKNQRRQQKI (67 aa). Positions 409 to 420 are enriched in acidic residues; sequence EDEDQDSEEEKD. Position 415 is a phosphoserine (serine 415). The span at 421–430 shows a compositional bias: basic and acidic residues; the sequence is NDSYIKERSD. The span at 438-458 shows a compositional bias: basic residues; sequence HLQKKAKKQAKKQAKNQRRQQ. Serine 552 is modified (phosphoserine). Threonine 557 is subject to Phosphothreonine. The active-site Proton acceptor is histidine 761.

Belongs to the peptidase C19 family. USP16 subfamily. As to quaternary structure, homotetramer. Associates with late pre-40S ribosomes. Interacts with CEP78; promoting deubiquitination of tektins. Phosphorylated at the onset of mitosis and dephosphorylated during the metaphase/anaphase transition. Phosphorylation by AURKB enhances the deubiquitinase activity.

It localises to the nucleus. The enzyme catalyses Thiol-dependent hydrolysis of ester, thioester, amide, peptide and isopeptide bonds formed by the C-terminal Gly of ubiquitin (a 76-residue protein attached to proteins as an intracellular targeting signal).. Specifically deubiquitinates 'Lys-120' of histone H2A (H2AK119Ub), a specific tag for epigenetic transcriptional repression, thereby acting as a coactivator. Deubiquitination of histone H2A is a prerequisite for subsequent phosphorylation at 'Ser-11' of histone H3 (H3S10ph), and is required for chromosome segregation when cells enter into mitosis. In resting B- and T-lymphocytes, phosphorylation by AURKB leads to enhance its activity, thereby maintaining transcription in resting lymphocytes. Regulates Hox gene expression via histone H2A deubiquitination. Prefers nucleosomal substrates. Does not deubiquitinate histone H2B. Also deubiquitinates non-histone proteins, such as ribosomal protein RPS27A: deubiquitination of monoubiquitinated RPS27A promotes maturation of the 40S ribosomal subunit. Also mediates deubiquitination of tektin proteins (TEKT1, TEKT2, TEK3, TEKT4 and TEKT5), promoting their stability. This chain is Ubiquitin carboxyl-terminal hydrolase 16, found in Macaca fascicularis (Crab-eating macaque).